The following is a 63-amino-acid chain: Large ribosomal subunit protein uL29 (63 aa).

Belongs to the universal ribosomal protein uL29 family.

In Bordetella avium (strain 197N), this protein is Large ribosomal subunit protein uL29.